The sequence spans 303 residues: Carboxypeptidase B (303 aa).

In terms of domain architecture, Peptidase M14 spans Ser-5–Val-298. 2 residues coordinate Zn(2+): His-63 and Glu-66. Residues His-63–Glu-66, Arg-118, and Asn-136–Arg-137 each bind substrate. Residue His-189 participates in Zn(2+) binding. Substrate-binding positions include Ser-190–Tyr-191 and Tyr-241. Catalysis depends on Glu-264, which acts as the Proton donor/acceptor.

Belongs to the peptidase M14 family. Requires Zn(2+) as cofactor.

It localises to the secreted. The enzyme catalyses Preferential release of a C-terminal lysine or arginine amino acid.. The polypeptide is Carboxypeptidase B (Astacus astacus (Noble crayfish)).